We begin with the raw amino-acid sequence, 385 residues long: MLCWELANRRKRIGPNRFGFPIAILTRQQLIEVLYTALSDKSKVKTGKKVVRIESEERRITTWTEDGSEYEGELVVGADGVHSVTRSEMWRAADNQQPGFIQEEEKYSLSAEYSCIWGLSTPVPGIRQGEQIIRSYDRLTFLIFPSQNGCLGWFAIQKLNRKHVYPDIRPFSQKDTLARCEALRDLPIWNDVKFGDLLTLTEVCAMTPLEENLFQTWNYGRILCIGDSISKLTPNIAQGANTAIEGAAAVANGLHQLLHHNGLNQPSYDEIQEVLGRYSQSQRKRMKKLHWISHMVTRLQSREGLINKFVGRYIYSHTGNSTFYLTGKMIAQGPVLNYLSTPKEIEIGLRASFDQYGKDGGDMPWKTTIMFIALLTIVVLIYSFI.

The FAD site is built by Arg-27, Asp-227, and Ala-240. A glycan (N-linked (GlcNAc...) asparagine) is linked at Asn-320. Residues 365–385 (WKTTIMFIALLTIVVLIYSFI) traverse the membrane as a helical segment.

It belongs to the paxM FAD-dependent monooxygenase family. It depends on FAD as a cofactor.

The protein localises to the membrane. It functions in the pathway secondary metabolite biosynthesis; terpenoid biosynthesis. It participates in mycotoxin biosynthesis. Functionally, FAD-dependent monooxygenase; part of the gene cluster that mediates the biosynthesis of the neurotoxin verrucosidin, a methylated alpha-pyrone polyketide that inhibits oxidative phosphorylation in mitochondria and thereby causes neurological diseases. The carbon backbone of verrucosidin is synthesized by the HR-PKS verA, and further modified by the other verrucodidin cluster enzymes. The chain is FAD-dependent monooxygenase verC2 from Penicillium polonicum.